The primary structure comprises 739 residues: UPF0313 protein YgiQ (739 aa).

Residues 372-650 (AYEMIRFSVN…KALLRYHDPA (279 aa)) form the Radical SAM core domain. [4Fe-4S] cluster is bound by residues Cys-386, Cys-390, and Cys-393. The tract at residues 685–739 (REARRQNRNTRPALTKHTPMATQRQTPATAKKASSTQSRPVNAGAKKRPKAAVGR) is disordered. A compositionally biased stretch (polar residues) spans 704 to 724 (MATQRQTPATAKKASSTQSRP). Residues 729 to 739 (AKKRPKAAVGR) show a composition bias toward basic residues.

The protein belongs to the UPF0313 family. [4Fe-4S] cluster serves as cofactor.

This is UPF0313 protein YgiQ from Shigella flexneri.